The chain runs to 152 residues: Transcriptional regulator MraZ (152 aa).

SpoVT-AbrB domains are found at residues 5–52 (INAI…TAAQ) and 81–124 (ATDV…NKEL).

This sequence belongs to the MraZ family. Forms oligomers.

It localises to the cytoplasm. The protein resides in the nucleoid. The sequence is that of Transcriptional regulator MraZ from Legionella pneumophila (strain Paris).